Here is a 999-residue protein sequence, read N- to C-terminus: Ulvan lyase, long isoform (999 aa).

The signal sequence occupies residues 1-21 (MKCLKTLLVSTTLLGAFSLNA). 126 to 127 (SH) contacts substrate. Histidine 127 serves as the catalytic Proton donor/acceptor. Aspartate 189, aspartate 199, and lysine 201 together coordinate Ca(2+). Positions 280 and 297 each coordinate substrate. 3 residues coordinate Ca(2+): aspartate 300, aspartate 303, and tyrosine 305. A substrate-binding site is contributed by tyrosine 361.

Belongs to the polysaccharide lyase 24 family.

Ulvan lyase involved in ulvan degradation. Ulvan is the main polysaccharide component of the Ulvales (green seaweed) cell wall. It is composed of disaccharide building blocks comprising 3-sulfated rhamnose (Rha3S) linked to D-glucuronic acid (GlcA), L-iduronic acid (IduA), or D-xylose (Xyl). Ulvan lyase catalyzes preferentially the endolytic cleavage of the glycosidic bond between Rha3S and the uronic acid GlcA, but not IduA, producing oligosaccharides that have unsaturated 4-deoxy-L-threo-hex-4-enopyranosiduronic acid (deltaUA) at the non-reducing end. The most abundant end products in the degradation of the ulvan polysaccharide were deltaUA-Rha3S disaccharides and deltaUA-Rha3S-IduA-Rha3S and deltaUA-Rha3S-Xyl-Rha3S tetrasaccharides. This Alteromonas sp protein is Ulvan lyase, long isoform.